Here is a 110-residue protein sequence, read N- to C-terminus: Large ribosomal subunit protein uL22 (110 aa).

The protein belongs to the universal ribosomal protein uL22 family. As to quaternary structure, part of the 50S ribosomal subunit.

Its function is as follows. This protein binds specifically to 23S rRNA; its binding is stimulated by other ribosomal proteins, e.g. L4, L17, and L20. It is important during the early stages of 50S assembly. It makes multiple contacts with different domains of the 23S rRNA in the assembled 50S subunit and ribosome. The globular domain of the protein is located near the polypeptide exit tunnel on the outside of the subunit, while an extended beta-hairpin is found that lines the wall of the exit tunnel in the center of the 70S ribosome. The polypeptide is Large ribosomal subunit protein uL22 (Chromohalobacter salexigens (strain ATCC BAA-138 / DSM 3043 / CIP 106854 / NCIMB 13768 / 1H11)).